A 156-amino-acid chain; its full sequence is ATP synthase subunit b (156 aa).

A helical membrane pass occupies residues 11–31 (AIAFVLFVIFCMKYVWPPIMA).

It belongs to the ATPase B chain family. As to quaternary structure, F-type ATPases have 2 components, F(1) - the catalytic core - and F(0) - the membrane proton channel. F(1) has five subunits: alpha(3), beta(3), gamma(1), delta(1), epsilon(1). F(0) has three main subunits: a(1), b(2) and c(10-14). The alpha and beta chains form an alternating ring which encloses part of the gamma chain. F(1) is attached to F(0) by a central stalk formed by the gamma and epsilon chains, while a peripheral stalk is formed by the delta and b chains.

The protein resides in the cell inner membrane. F(1)F(0) ATP synthase produces ATP from ADP in the presence of a proton or sodium gradient. F-type ATPases consist of two structural domains, F(1) containing the extramembraneous catalytic core and F(0) containing the membrane proton channel, linked together by a central stalk and a peripheral stalk. During catalysis, ATP synthesis in the catalytic domain of F(1) is coupled via a rotary mechanism of the central stalk subunits to proton translocation. In terms of biological role, component of the F(0) channel, it forms part of the peripheral stalk, linking F(1) to F(0). The sequence is that of ATP synthase subunit b from Yersinia pseudotuberculosis serotype O:1b (strain IP 31758).